Reading from the N-terminus, the 308-residue chain is uncharacterized protein (308 aa).

This is an uncharacterized protein from Bos taurus (Bovine).